The chain runs to 324 residues: Glutaminase 2 (324 aa).

Residues serine 75, asparagine 127, glutamate 171, asparagine 178, tyrosine 202, tyrosine 254, and valine 272 each coordinate substrate.

It belongs to the glutaminase family. In terms of assembly, homotetramer.

It catalyses the reaction L-glutamine + H2O = L-glutamate + NH4(+). The sequence is that of Glutaminase 2 from Halalkalibacterium halodurans (strain ATCC BAA-125 / DSM 18197 / FERM 7344 / JCM 9153 / C-125) (Bacillus halodurans).